A 246-amino-acid polypeptide reads, in one-letter code: Large ribosomal subunit protein uL30 (246 aa).

The protein belongs to the universal ribosomal protein uL30 family.

In terms of biological role, binds to G-rich structures in 28S rRNA and in mRNAs. Plays a regulatory role in the translation apparatus; inhibits cell-free translation of mRNAs. This chain is Large ribosomal subunit protein uL30 (rpl7), found in Dictyostelium discoideum (Social amoeba).